The primary structure comprises 465 residues: Hepatocyte nuclear factor 6 (465 aa).

Disordered stretches follow at residues 15–84 (GVSH…GPLH) and 119–141 (SDKF…HQRL). Over residues 123–140 (PHHHHHHHHHHHPHHHQR) the composition is skewed to basic residues. The CUT DNA-binding region spans 283-369 (GSNSGQMEEI…QRMSALRLAA (87 aa)). The segment at residues 385–444 (PKKPRLVFTDVQRRTLHAIFKENKRPSKELQITISQQLGLELSTVSNFFMNARRRSLDKW) is a DNA-binding region (homeobox). A disordered region spans residues 443–465 (KWQDEGGSNSGSSSSSSSTCTKA). A compositionally biased stretch (low complexity) spans 448-465 (GGSNSGSSSSSSSTCTKA).

It belongs to the CUT homeobox family. Binds DNA as a monomer.

It localises to the nucleus. Its function is as follows. Transcriptional activator. Binds the consensus sequence 5'-DHWATTGAYTWWD-3' on a variety of gene promoters such as those of HNF3B and TTR. Important for liver genes transcription. Stimulates the expression of Onecut3 in the developing endoderm. This Mus musculus (Mouse) protein is Hepatocyte nuclear factor 6 (Onecut1).